Here is an 879-residue protein sequence, read N- to C-terminus: Prostaglandin F2 receptor negative regulator (879 aa).

The N-terminal stretch at 1-25 (MGRLASRPLLLALLSLALCRGRVVR) is a signal peptide. 2 Ig-like C2-type domains span residues 26-129 (VPTA…ATVQ) and 149-268 (PSAR…KAVE). At 26-832 (VPTATLVRVV…MDVLNAFKYP (807 aa)) the chain is on the extracellular side. Disulfide bonds link cysteine 43-cysteine 119 and cysteine 169-cysteine 247. Asparagine 44 is a glycosylation site (N-linked (GlcNAc...) asparagine). Residue threonine 271 is modified to Phosphothreonine. Ig-like C2-type domains lie at 276–394 (PSVL…EAVS), 406–536 (PDYQ…DVFS), 544–662 (ALED…AWSP), and 688–813 (PIFN…AEIH). Residues asparagine 286, asparagine 300, asparagine 383, and asparagine 413 are each glycosylated (N-linked (GlcNAc...) asparagine). Cysteine 299 and cysteine 373 form a disulfide bridge. Residues 424–427 (PTEL) carry the Endoplasmic reticulum retention signal motif. Cysteine 429 and cysteine 515 are disulfide-bonded. N-linked (GlcNAc...) asparagine glycans are attached at residues asparagine 525, asparagine 600, asparagine 618, and asparagine 691. A disulfide bridge connects residues cysteine 571 and cysteine 655. Residues 703 to 705 (RGD) carry the Cell attachment site motif. A disulfide bridge connects residues cysteine 711 and cysteine 793. A helical membrane pass occupies residues 833-853 (LLIGVGLSTVIGLLSCLIGYC). The Cytoplasmic segment spans residues 854–879 (SSHWCCKKEVQETRRERRRLMSMEMD).

In terms of assembly, interacts with CD9 and CD81. Part of a complex composed of CD9, CD81 and IGSF8. Also seems to interact with CD63, CD82 and CD151.

It is found in the endoplasmic reticulum membrane. The protein localises to the golgi apparatus. Its subcellular location is the trans-Golgi network membrane. In terms of biological role, inhibits the binding of prostaglandin F2-alpha (PGF2-alpha) to its specific FP receptor, by decreasing the receptor number rather than the affinity constant. Functional coupling with the prostaglandin F2-alpha receptor seems to occur. In myoblasts, associates with tetraspanins CD9 and CD81 to prevent myotube fusion during muscle regeneration. The protein is Prostaglandin F2 receptor negative regulator (PTGFRN) of Homo sapiens (Human).